The sequence spans 202 residues: Heart- and neural crest derivatives-expressed protein 1 (202 aa).

Positions 83–135 (RKGVGGPKKERRRTESINSAFAELRECIPNVPADTKLSKIKTLRLATSYIAYL) constitute a bHLH domain. The disordered stretch occupies residues 143 to 187 (SQPGEPEGFKAELKKADGRENKRKRETQPEVYSQPLAHGEKKLKG). The span at 149-162 (EGFKAELKKADGRE) shows a compositional bias: basic and acidic residues.

Efficient DNA binding requires dimerization with another bHLH protein.

The protein resides in the nucleus. It is found in the nucleoplasm. It localises to the nucleolus. Functionally, transcription factor. Plays an essential role in cardiac morphogenesis. The protein is Heart- and neural crest derivatives-expressed protein 1 (HAND1) of Gallus gallus (Chicken).